The primary structure comprises 117 residues: Protein OPG035 (117 aa).

It belongs to the poxviridae OPG035 family.

Functionally, bcl-2-like protein which contributes to virulence by preventing host NF-kappa-B activation in response to pro-inflammatory stimuli such as TNF-alpha or IL1B. This is Protein OPG035 (OPG035) from Monkeypox virus.